A 308-amino-acid chain; its full sequence is Ribosomal RNA large subunit methyltransferase F (308 aa).

The interval 190–212 is disordered; sequence DSAASARAGSERKRRNLGQDKND.

Belongs to the methyltransferase superfamily. METTL16/RlmF family.

The protein localises to the cytoplasm. It carries out the reaction adenosine(1618) in 23S rRNA + S-adenosyl-L-methionine = N(6)-methyladenosine(1618) in 23S rRNA + S-adenosyl-L-homocysteine + H(+). Functionally, specifically methylates the adenine in position 1618 of 23S rRNA. This is Ribosomal RNA large subunit methyltransferase F from Citrobacter koseri (strain ATCC BAA-895 / CDC 4225-83 / SGSC4696).